The chain runs to 75 residues: MGKMKILKKLLSKKGQLSMEVGVLVAAAVLVAIIAAYFYVKNAKSAVASAGNKSAAFINVTANKSQEYISNLSNI.

A propeptide spanning residues 1–15 is cleaved from the precursor; it reads MGKMKILKKLLSKKG. Positions 16–24 match the QXSXEXXXL motif; it reads QLSMEVGVL.

Post-translationally, the N-terminus is cleaved by the prepilin peptidase EppA, which recognizes the class III signal sequence.

It is found in the secreted. Its subcellular location is the cell surface. It localises to the fimbrium. This chain is Probable pilin MJ0431, found in Methanocaldococcus jannaschii (strain ATCC 43067 / DSM 2661 / JAL-1 / JCM 10045 / NBRC 100440) (Methanococcus jannaschii).